The primary structure comprises 710 residues: DNA ligase (710 aa).

Positions 1–26 are disordered; it reads MPEDAIGQQVPPEQEAAGAEPTSAAR. Residues 53 to 57, 102 to 103, and glutamate 132 each bind NAD(+); these read DAEFD and SL. Residue lysine 134 is the N6-AMP-lysine intermediate of the active site. NAD(+) is bound by residues arginine 155, glutamate 196, lysine 312, and lysine 336. Zn(2+) is bound by residues cysteine 430, cysteine 433, cysteine 449, and cysteine 455. Residues 619–708 form the BRCT domain; it reads EGPRPLEGMT…PDAAREVARV (90 aa).

It belongs to the NAD-dependent DNA ligase family. LigA subfamily. It depends on Mg(2+) as a cofactor. Mn(2+) is required as a cofactor.

The enzyme catalyses NAD(+) + (deoxyribonucleotide)n-3'-hydroxyl + 5'-phospho-(deoxyribonucleotide)m = (deoxyribonucleotide)n+m + AMP + beta-nicotinamide D-nucleotide.. Its function is as follows. DNA ligase that catalyzes the formation of phosphodiester linkages between 5'-phosphoryl and 3'-hydroxyl groups in double-stranded DNA using NAD as a coenzyme and as the energy source for the reaction. It is essential for DNA replication and repair of damaged DNA. In Salinispora arenicola (strain CNS-205), this protein is DNA ligase.